The chain runs to 426 residues: Histidine--tRNA ligase (426 aa).

Belongs to the class-II aminoacyl-tRNA synthetase family. Homodimer.

Its subcellular location is the cytoplasm. It catalyses the reaction tRNA(His) + L-histidine + ATP = L-histidyl-tRNA(His) + AMP + diphosphate + H(+). In Streptococcus pyogenes serotype M3 (strain ATCC BAA-595 / MGAS315), this protein is Histidine--tRNA ligase.